The primary structure comprises 142 residues: Large ribosomal subunit protein uL11 (142 aa).

Belongs to the universal ribosomal protein uL11 family. Part of the ribosomal stalk of the 50S ribosomal subunit. Interacts with L10 and the large rRNA to form the base of the stalk. L10 forms an elongated spine to which L12 dimers bind in a sequential fashion forming a multimeric L10(L12)X complex. In terms of processing, one or more lysine residues are methylated.

In terms of biological role, forms part of the ribosomal stalk which helps the ribosome interact with GTP-bound translation factors. In Enterobacter sp. (strain 638), this protein is Large ribosomal subunit protein uL11.